The chain runs to 347 residues: Tetraacyldisaccharide 4'-kinase (347 aa).

65–72 is an ATP binding site; it reads FVGGTGKT.

The protein belongs to the LpxK family.

It catalyses the reaction a lipid A disaccharide + ATP = a lipid IVA + ADP + H(+). The protein operates within glycolipid biosynthesis; lipid IV(A) biosynthesis; lipid IV(A) from (3R)-3-hydroxytetradecanoyl-[acyl-carrier-protein] and UDP-N-acetyl-alpha-D-glucosamine: step 6/6. In terms of biological role, transfers the gamma-phosphate of ATP to the 4'-position of a tetraacyldisaccharide 1-phosphate intermediate (termed DS-1-P) to form tetraacyldisaccharide 1,4'-bis-phosphate (lipid IVA). The protein is Tetraacyldisaccharide 4'-kinase of Janthinobacterium sp. (strain Marseille) (Minibacterium massiliensis).